The primary structure comprises 118 residues: Small ribosomal subunit protein uS13 (118 aa).

Residues 92-118 are disordered; sequence RRSLPVRGQRTKTNARTRKGPRKPIKK.

This sequence belongs to the universal ribosomal protein uS13 family. In terms of assembly, part of the 30S ribosomal subunit. Forms a loose heterodimer with protein S19. Forms two bridges to the 50S subunit in the 70S ribosome.

Functionally, located at the top of the head of the 30S subunit, it contacts several helices of the 16S rRNA. In the 70S ribosome it contacts the 23S rRNA (bridge B1a) and protein L5 of the 50S subunit (bridge B1b), connecting the 2 subunits; these bridges are implicated in subunit movement. Contacts the tRNAs in the A and P-sites. This Acinetobacter baumannii (strain AB307-0294) protein is Small ribosomal subunit protein uS13.